A 212-amino-acid chain; its full sequence is Proteasome subunit beta (212 aa).

Positions 1–11 (MSQEHQDVKTG) are cleaved as a propeptide — removed in mature form; by autocatalysis. The Nucleophile role is filled by Thr-12.

This sequence belongs to the peptidase T1B family. The 20S proteasome core is composed of 14 alpha and 14 beta subunits that assemble into four stacked heptameric rings, resulting in a barrel-shaped structure. The two inner rings, each composed of seven catalytic beta subunits, are sandwiched by two outer rings, each composed of seven alpha subunits. The catalytic chamber with the active sites is on the inside of the barrel. Has a gated structure, the ends of the cylinder being occluded by the N-termini of the alpha-subunits. Is capped at one or both ends by the proteasome regulatory ATPase, PAN.

The protein resides in the cytoplasm. It carries out the reaction Cleavage of peptide bonds with very broad specificity.. With respect to regulation, the formation of the proteasomal ATPase PAN-20S proteasome complex, via the docking of the C-termini of PAN into the intersubunit pockets in the alpha-rings, triggers opening of the gate for substrate entry. Interconversion between the open-gate and close-gate conformations leads to a dynamic regulation of the 20S proteasome proteolysis activity. Component of the proteasome core, a large protease complex with broad specificity involved in protein degradation. This is Proteasome subunit beta from Methanocorpusculum labreanum (strain ATCC 43576 / DSM 4855 / Z).